We begin with the raw amino-acid sequence, 384 residues long: Endoglucanase (384 aa).

The N-terminal stretch at 1–25 is a signal peptide; the sequence is MTRRRLLHAGTLAGVAALLPAAALA. Glutamate 63 functions as the Proton donor in the catalytic mechanism. The active-site Nucleophile is the aspartate 124.

This sequence belongs to the glycosyl hydrolase 8 (cellulase D) family.

Its subcellular location is the secreted. It catalyses the reaction Endohydrolysis of (1-&gt;4)-beta-D-glucosidic linkages in cellulose, lichenin and cereal beta-D-glucans.. Its pathway is glycan metabolism; bacterial cellulose biosynthesis. Its function is as follows. Hydrolyzes carboxymethylcellulose. This Xanthomonas axonopodis pv. citri (strain 306) protein is Endoglucanase (bcsZ).